Consider the following 134-residue polypeptide: Acyl carrier protein, chloroplastic (134 aa).

A chloroplast-targeting transit peptide spans 1–51; that stretch reads MSTTFCSSVSMQATSLAATTRISFQKPALVSRTNLSFNLSRSIPTRLSVSC. The Carrier domain occupies 55–130; sequence PETVEKVSKI…EAAELIDELV (76 aa). Ser-90 bears the O-(pantetheine 4'-phosphoryl)serine mark.

This sequence belongs to the acyl carrier protein (ACP) family. Post-translationally, 4'-phosphopantetheine is transferred from CoA to a specific serine of apo-ACP by acpS. This modification is essential for activity because fatty acids are bound in thioester linkage to the sulfhydryl of the prosthetic group. In terms of tissue distribution, seed.

Its subcellular location is the plastid. The protein localises to the chloroplast. It participates in lipid metabolism; fatty acid biosynthesis. Its function is as follows. Carrier of the growing fatty acid chain in fatty acid biosynthesis. The sequence is that of Acyl carrier protein, chloroplastic (ACL1.A1) from Brassica napus (Rape).